A 426-amino-acid chain; its full sequence is MKRDDLIFDIIEKEHQRQLKGIELIASENFVSDQVMEAMGSCLTNKYAEGYPGKRYYGGCEVVDQSEQIAIDRLKEIFGAEWANVQPHSGAQANAAVFLAVLNPGDKFMGLNLAHGGHLSHGSLVNTSGIIYTPCEYNLKQETGRVDYDQMEEVALREKPKMIIGGGSAYSREWDYKRMREIADKVGAILMIDMAHPAGLIAAGLLDNPVKYAHIVTSTTHKTLRGPRGGVIMMGKDFPNPWGKKTPKGEIKMMSQLLDSAVFPGIQGGPLEHVIAAKAVAFGECLQPEYKEYQKQVQKNAAVLAQALIDRGFTIVSGGTDNHSMLVDLRSKYPTLTGKVAEKALVSADITVNKNMVPFDSRSAFQTSGIRLGTPAITTRGAKEDLMLEIAEMIETVLSNVENEEVIAQVRARVNKTMEKYPIFAY.

Residues Leu-113 and 117–119 contribute to the (6S)-5,6,7,8-tetrahydrofolate site; that span reads GHL. Lys-222 carries the post-translational modification N6-(pyridoxal phosphate)lysine. 363-365 lines the (6S)-5,6,7,8-tetrahydrofolate pocket; it reads SAF.

Belongs to the SHMT family. Homodimer. It depends on pyridoxal 5'-phosphate as a cofactor.

It is found in the cytoplasm. It catalyses the reaction (6R)-5,10-methylene-5,6,7,8-tetrahydrofolate + glycine + H2O = (6S)-5,6,7,8-tetrahydrofolate + L-serine. Its pathway is one-carbon metabolism; tetrahydrofolate interconversion. It functions in the pathway amino-acid biosynthesis; glycine biosynthesis; glycine from L-serine: step 1/1. Its function is as follows. Catalyzes the reversible interconversion of serine and glycine with tetrahydrofolate (THF) serving as the one-carbon carrier. This reaction serves as the major source of one-carbon groups required for the biosynthesis of purines, thymidylate, methionine, and other important biomolecules. Also exhibits THF-independent aldolase activity toward beta-hydroxyamino acids, producing glycine and aldehydes, via a retro-aldol mechanism. This Bacteroides fragilis (strain ATCC 25285 / DSM 2151 / CCUG 4856 / JCM 11019 / LMG 10263 / NCTC 9343 / Onslow / VPI 2553 / EN-2) protein is Serine hydroxymethyltransferase.